Here is a 252-residue protein sequence, read N- to C-terminus: Flagellar L-ring protein (252 aa).

The first 25 residues, 1-25, serve as a signal peptide directing secretion; the sequence is MSKSVPLQRIVLVAALMATGGLAGG. Cysteine 26 is lipidated: N-palmitoyl cysteine. The S-diacylglycerol cysteine moiety is linked to residue cysteine 26.

Belongs to the FlgH family. As to quaternary structure, the basal body constitutes a major portion of the flagellar organelle and consists of four rings (L,P,S, and M) mounted on a central rod.

It is found in the cell outer membrane. The protein resides in the bacterial flagellum basal body. Its function is as follows. Assembles around the rod to form the L-ring and probably protects the motor/basal body from shearing forces during rotation. This chain is Flagellar L-ring protein, found in Rhodopseudomonas palustris (strain ATCC BAA-98 / CGA009).